The chain runs to 153 residues: S-ribosylhomocysteine lyase (153 aa).

Residues His-57, His-61, and Cys-124 each contribute to the Fe cation site.

It belongs to the LuxS family. Homodimer. The cofactor is Fe cation.

The enzyme catalyses S-(5-deoxy-D-ribos-5-yl)-L-homocysteine = (S)-4,5-dihydroxypentane-2,3-dione + L-homocysteine. In terms of biological role, involved in the synthesis of autoinducer 2 (AI-2) which is secreted by bacteria and is used to communicate both the cell density and the metabolic potential of the environment. The regulation of gene expression in response to changes in cell density is called quorum sensing. Catalyzes the transformation of S-ribosylhomocysteine (RHC) to homocysteine (HC) and 4,5-dihydroxy-2,3-pentadione (DPD). The chain is S-ribosylhomocysteine lyase from Oceanobacillus iheyensis (strain DSM 14371 / CIP 107618 / JCM 11309 / KCTC 3954 / HTE831).